Here is a 1651-residue protein sequence, read N- to C-terminus: Alsin (1651 aa).

RCC1 repeat units follow at residues Asp-59–Glu-108, Ser-109–Ile-167, and Arg-169–Gln-218. The interval Arg-444 to Leu-476 is disordered. Positions Gln-450–Leu-461 are enriched in polar residues. Phosphoserine is present on residues Ser-459, Ser-460, Ser-477, and Ser-486. Thr-504 carries the phosphothreonine modification. 2 RCC1 repeats span residues Arg-519–Ala-570 and Ser-572–Asp-621. Position 527 is an N6-acetyllysine (Lys-527). The 196-residue stretch at Gly-684–Lys-879 folds into the DH domain. In terms of domain architecture, PH spans Gly-895–Ala-1001. MORN repeat units lie at residues Tyr-1043 to Val-1065, Tyr-1066 to Leu-1088, Tyr-1094 to Val-1116, Phe-1117 to Ser-1139, Phe-1145 to Glu-1167, Tyr-1169 to Tyr-1191, Tyr-1192 to Ile-1214, and Tyr-1215 to Tyr-1238. A Phosphoserine modification is found at Ser-1329. A VPS9 domain is found at Lys-1507 to Asn-1651.

In terms of assembly, forms a heteromeric complex with ALS2CL. Interacts with ALS2CL.

Functionally, may act as a GTPase regulator. Controls survival and growth of spinal motoneurons. This chain is Alsin (Als2), found in Rattus norvegicus (Rat).